Consider the following 130-residue polypeptide: Small ribosomal subunit protein uS9 (130 aa).

The interval 111 to 130 (VERKKVGLRKARRRPQFSKR) is disordered. Positions 116–130 (VGLRKARRRPQFSKR) are enriched in basic residues.

Belongs to the universal ribosomal protein uS9 family.

This Enterobacter sp. (strain 638) protein is Small ribosomal subunit protein uS9.